Consider the following 509-residue polypeptide: Dihydrolipoyl dehydrogenase, mitochondrial (509 aa).

Residues 1–35 (MQSWSRVYCSLVKRGHFSRISHGLQGVSVVPLRTY) constitute a mitochondrion transit peptide. Lys-66 bears the N6-acetyllysine; alternate mark. The residue at position 66 (Lys-66) is an N6-succinyllysine; alternate. FAD is bound by residues 71–80 (EKNETLGGTC) and Lys-89. An intrachain disulfide couples Cys-80 to Cys-85. Residues Lys-104, Lys-122, Lys-132, and Lys-143 each carry the N6-acetyllysine; alternate modification. N6-succinyllysine; alternate occurs at positions 104, 122, 132, and 143. Gly-154 is a binding site for FAD. An N6-succinyllysine mark is found at Lys-159 and Lys-166. FAD is bound at residue 183-185 (TGS). NAD(+) contacts are provided by residues 220-227 (GAGVIGVE) and Glu-243. Lys-273 and Lys-277 each carry N6-succinyllysine. Val-278 lines the NAD(+) pocket. Ser-285 and Ser-297 each carry phosphoserine. NAD(+) is bound at residue Gly-314. An N6-acetyllysine modification is found at Lys-346. FAD is bound by residues Asp-355 and 361–364 (MLAH). An N6-acetyllysine; alternate modification is found at Lys-410. Lys-410 is subject to N6-succinyllysine; alternate. N6-acetyllysine occurs at positions 417 and 420. An N6-succinyllysine modification is found at Lys-430. The Proton acceptor role is filled by His-487. Lys-505 carries the N6-acetyllysine; alternate modification. Lys-505 carries the post-translational modification N6-succinyllysine; alternate.

Belongs to the class-I pyridine nucleotide-disulfide oxidoreductase family. Homodimer. Part of the multimeric pyruvate dehydrogenase complex that contains multiple copies of pyruvate dehydrogenase (subunits PDHA (PDHA1 or PDHA2) and PDHB, E1), dihydrolipoamide acetyltransferase (DLAT, E2) and lipoamide dehydrogenase (DLD, E3). These subunits are bound to an inner core composed of about 48 DLAT and 12 PDHX molecules (by non covalent bonds). The 2-oxoglutarate dehydrogenase complex is composed of OGDH (2-oxoglutarate dehydrogenase; E1), DLST (dihydrolipoamide succinyltransferase; E2), DLD (dihydrolipoamide dehydrogenase; E3) and the assembly factor KGD4. It contains multiple copies of the three enzymatic components (E1, E2 and E3). In the nucleus, the 2-oxoglutarate dehydrogenase complex associates with KAT2A. Interacts with PDHX. FAD serves as cofactor. Post-translationally, tyrosine phosphorylated.

It is found in the mitochondrion matrix. It localises to the nucleus. Its subcellular location is the cell projection. The protein resides in the cilium. The protein localises to the flagellum. It is found in the cytoplasmic vesicle. It localises to the secretory vesicle. Its subcellular location is the acrosome. It catalyses the reaction N(6)-[(R)-dihydrolipoyl]-L-lysyl-[protein] + NAD(+) = N(6)-[(R)-lipoyl]-L-lysyl-[protein] + NADH + H(+). In terms of biological role, lipoamide dehydrogenase is a component of the glycine cleavage system as well as an E3 component of three alpha-ketoacid dehydrogenase complexes (pyruvate-, alpha-ketoglutarate-, and branched-chain amino acid-dehydrogenase complex). The 2-oxoglutarate dehydrogenase complex is mainly active in the mitochondrion. A fraction of the 2-oxoglutarate dehydrogenase complex also localizes in the nucleus and is required for lysine succinylation of histones: associates with KAT2A on chromatin and provides succinyl-CoA to histone succinyltransferase KAT2A. In monomeric form may have additional moonlighting function as serine protease. Involved in the hyperactivation of spermatazoa during capacitation and in the spermatazoal acrosome reaction. This chain is Dihydrolipoyl dehydrogenase, mitochondrial (DLD), found in Bos taurus (Bovine).